Here is a 287-residue protein sequence, read N- to C-terminus: Inorganic pyrophosphatase (287 aa).

Arginine 79 is a binding site for diphosphate. Residues aspartate 116, aspartate 121, and aspartate 153 each contribute to the Mg(2+) site. Positions 244–258 (NSTLGNSDSVDSSKL) are enriched in polar residues. The segment at 244 to 269 (NSTLGNSDSVDSSKLASIPRGENLPP) is disordered.

Belongs to the PPase family. Mg(2+) is required as a cofactor.

The protein localises to the cytoplasm. It carries out the reaction diphosphate + H2O = 2 phosphate + H(+). In terms of biological role, involved in osmoadaptation. The protein is Inorganic pyrophosphatase (ipp1) of Emericella nidulans (strain FGSC A4 / ATCC 38163 / CBS 112.46 / NRRL 194 / M139) (Aspergillus nidulans).